The following is a 120-amino-acid chain: Peptidyl-tRNA hydrolase (120 aa).

It belongs to the PTH2 family.

Its subcellular location is the cytoplasm. It catalyses the reaction an N-acyl-L-alpha-aminoacyl-tRNA + H2O = an N-acyl-L-amino acid + a tRNA + H(+). In terms of biological role, the natural substrate for this enzyme may be peptidyl-tRNAs which drop off the ribosome during protein synthesis. The polypeptide is Peptidyl-tRNA hydrolase (Saccharolobus islandicus (strain Y.N.15.51 / Yellowstone #2) (Sulfolobus islandicus)).